Here is a 341-residue protein sequence, read N- to C-terminus: tRNA N6-adenosine threonylcarbamoyltransferase (341 aa).

The Fe cation site is built by H111 and H115. Substrate is bound by residues 134–138 (LVSGG), D167, G180, and N276. D304 serves as a coordination point for Fe cation.

Belongs to the KAE1 / TsaD family. Requires Fe(2+) as cofactor.

The protein localises to the cytoplasm. It catalyses the reaction L-threonylcarbamoyladenylate + adenosine(37) in tRNA = N(6)-L-threonylcarbamoyladenosine(37) in tRNA + AMP + H(+). Its function is as follows. Required for the formation of a threonylcarbamoyl group on adenosine at position 37 (t(6)A37) in tRNAs that read codons beginning with adenine. Is involved in the transfer of the threonylcarbamoyl moiety of threonylcarbamoyl-AMP (TC-AMP) to the N6 group of A37, together with TsaE and TsaB. TsaD likely plays a direct catalytic role in this reaction. In Pseudomonas syringae pv. syringae (strain B728a), this protein is tRNA N6-adenosine threonylcarbamoyltransferase.